A 183-amino-acid chain; its full sequence is Dual-action ribosomal maturation protein DarP (183 aa).

The protein belongs to the DarP family.

Its subcellular location is the cytoplasm. Member of a network of 50S ribosomal subunit biogenesis factors which assembles along the 30S-50S interface, preventing incorrect 23S rRNA structures from forming. Promotes peptidyl transferase center (PTC) maturation. This is Dual-action ribosomal maturation protein DarP from Shigella flexneri serotype 5b (strain 8401).